Consider the following 561-residue polypeptide: Glutamate--tRNA ligase (561 aa).

A 'HIGH' region motif is present at residues 107–117 (PNPSGPLHLGH).

The protein belongs to the class-I aminoacyl-tRNA synthetase family. Glutamate--tRNA ligase type 2 subfamily.

The protein resides in the cytoplasm. It catalyses the reaction tRNA(Glu) + L-glutamate + ATP = L-glutamyl-tRNA(Glu) + AMP + diphosphate. Catalyzes the attachment of glutamate to tRNA(Glu) in a two-step reaction: glutamate is first activated by ATP to form Glu-AMP and then transferred to the acceptor end of tRNA(Glu). The sequence is that of Glutamate--tRNA ligase from Methanoculleus marisnigri (strain ATCC 35101 / DSM 1498 / JR1).